A 502-amino-acid chain; its full sequence is Maturase K (502 aa).

The protein belongs to the intron maturase 2 family. MatK subfamily.

The protein resides in the plastid. It localises to the chloroplast. Its function is as follows. Usually encoded in the trnK tRNA gene intron. Probably assists in splicing its own and other chloroplast group II introns. In Theobroma cacao (Cacao), this protein is Maturase K.